The primary structure comprises 160 residues: Eosinophil cationic protein (160 aa).

The first 27 residues, 1-27 (MVPKLFTSQICLLLLLGLSGVGGSLHA), serve as a signal peptide directing secretion. A required for nearly all of the bactericidal activities; partially involved in LPS-binding region spans residues 28-72 (KPRQFTRAQWFAIQHVSLNPPQCTTAMRVINNYQRRCKDQNTFLR). The Proton acceptor role is filled by H42. 4 disulfides stabilise this stretch: C50–C110, C64–C123, C82–C138, and C89–C98. Y60 bears the 3'-nitrotyrosine mark. 65-69 (KDQNT) contributes to the substrate binding site. 4 N-linked (GlcNAc...) asparagine glycosylation sites follow: N86, N92, N111, and N119. H155 acts as the Proton donor in catalysis.

It belongs to the pancreatic ribonuclease family. In terms of assembly, interacts with bacterial lipopolysaccharide (LPS) and lipoteichoic acid (LTA). In vitro interacts with phospholipid bilayers.

It is found in the secreted. Functionally, cytotoxin and helminthotoxin with low-efficiency ribonuclease activity. Possesses a wide variety of biological activities. Exhibits antibacterial activity. The polypeptide is Eosinophil cationic protein (RNASE3) (Pongo pygmaeus (Bornean orangutan)).